We begin with the raw amino-acid sequence, 323 residues long: ATP synthase gamma chain (323 aa).

The tract at residues 215–237 (PAGGPAKEQEQGDEGGHGAPSAA) is disordered. Residues 221–230 (KEQEQGDEGG) show a composition bias toward basic and acidic residues.

It belongs to the ATPase gamma chain family. F-type ATPases have 2 components, CF(1) - the catalytic core - and CF(0) - the membrane proton channel. CF(1) has five subunits: alpha(3), beta(3), gamma(1), delta(1), epsilon(1). CF(0) has three main subunits: a, b and c.

Its subcellular location is the cell inner membrane. In terms of biological role, produces ATP from ADP in the presence of a proton gradient across the membrane. The gamma chain is believed to be important in regulating ATPase activity and the flow of protons through the CF(0) complex. The polypeptide is ATP synthase gamma chain (Sorangium cellulosum (strain So ce56) (Polyangium cellulosum (strain So ce56))).